The chain runs to 165 residues: UPF0303 protein BamMC406_1480 (165 aa).

It belongs to the UPF0303 family.

This is UPF0303 protein BamMC406_1480 from Burkholderia ambifaria (strain MC40-6).